The primary structure comprises 340 residues: Anthocyanidin reductase (340 aa).

Residues Lys49 and Tyr169 each coordinate NADP(+).

Belongs to the NAD(P)-dependent epimerase/dehydratase family. Dihydroflavonol-4-reductase subfamily. Homo- or heterodimer. As to expression, flowers and young siliques. Detected specifically in the endothelium of seed coat.

The catalysed reaction is a (2R,3R)-flavan-3-ol + 2 NAD(+) = an anthocyanidin with a 3-hydroxy group + 2 NADH + 2 H(+). It catalyses the reaction a (2R,3R)-flavan-3-ol + 2 NADP(+) = an anthocyanidin with a 3-hydroxy group + 2 NADPH + 2 H(+). It functions in the pathway secondary metabolite biosynthesis; flavonoid biosynthesis. With respect to regulation, inhibited by (+)-catechin, quercetin and (+)- and (-)-dihydroquercetin. Not inhibited by salt. Positive cooperativity with NADPH acting as cosubstrate and modulator. Its function is as follows. Involved in the biosynthesis of condensed tannins. Converts cyanidin into (-)-epicatechin as the major product. This chain is Anthocyanidin reductase (BAN), found in Arabidopsis thaliana (Mouse-ear cress).